The following is a 329-amino-acid chain: DNA-directed RNA polymerase subunit alpha (329 aa).

The tract at residues 1–235 is alpha N-terminal domain (alpha-NTD); it reads MQGSVTEFLK…EQLDAFVDLR (235 aa). The tract at residues 249–329 is alpha C-terminal domain (alpha-CTD); the sequence is FDPILLRPVD…NWPPASIAED (81 aa).

The protein belongs to the RNA polymerase alpha chain family. As to quaternary structure, homodimer. The RNAP catalytic core consists of 2 alpha, 1 beta, 1 beta' and 1 omega subunit. When a sigma factor is associated with the core the holoenzyme is formed, which can initiate transcription.

The catalysed reaction is RNA(n) + a ribonucleoside 5'-triphosphate = RNA(n+1) + diphosphate. In terms of biological role, DNA-dependent RNA polymerase catalyzes the transcription of DNA into RNA using the four ribonucleoside triphosphates as substrates. This Mannheimia succiniciproducens (strain KCTC 0769BP / MBEL55E) protein is DNA-directed RNA polymerase subunit alpha.